Here is a 175-residue protein sequence, read N- to C-terminus: SsrA-binding protein (175 aa).

2 disordered regions span residues 1–29 (MTRN…ERDA) and 152–175 (KRET…SRKS).

This sequence belongs to the SmpB family.

It localises to the cytoplasm. Its function is as follows. Required for rescue of stalled ribosomes mediated by trans-translation. Binds to transfer-messenger RNA (tmRNA), required for stable association of tmRNA with ribosomes. tmRNA and SmpB together mimic tRNA shape, replacing the anticodon stem-loop with SmpB. tmRNA is encoded by the ssrA gene; the 2 termini fold to resemble tRNA(Ala) and it encodes a 'tag peptide', a short internal open reading frame. During trans-translation Ala-aminoacylated tmRNA acts like a tRNA, entering the A-site of stalled ribosomes, displacing the stalled mRNA. The ribosome then switches to translate the ORF on the tmRNA; the nascent peptide is terminated with the 'tag peptide' encoded by the tmRNA and targeted for degradation. The ribosome is freed to recommence translation, which seems to be the essential function of trans-translation. The polypeptide is SsrA-binding protein (Koribacter versatilis (strain Ellin345)).